We begin with the raw amino-acid sequence, 323 residues long: Fructose-1,6-bisphosphatase class 1 (323 aa).

Residues Glu-84, Asp-103, Leu-105, and Asp-106 each coordinate Mg(2+). Residues 106-109 (DGSS), Asn-198, and Lys-264 contribute to the substrate site. Glu-270 is a binding site for Mg(2+).

Belongs to the FBPase class 1 family. As to quaternary structure, homotetramer. The cofactor is Mg(2+).

It localises to the cytoplasm. The catalysed reaction is beta-D-fructose 1,6-bisphosphate + H2O = beta-D-fructose 6-phosphate + phosphate. It functions in the pathway carbohydrate biosynthesis; gluconeogenesis. The polypeptide is Fructose-1,6-bisphosphatase class 1 (Pseudoalteromonas atlantica (strain T6c / ATCC BAA-1087)).